The sequence spans 166 residues: NADPH-dependent 7-cyano-7-deazaguanine reductase (166 aa).

Cys-57 (thioimide intermediate) is an active-site residue. The active-site Proton donor is the Asp-64. Substrate is bound by residues Val-79–Ser-81 and His-98–Glu-99.

The protein belongs to the GTP cyclohydrolase I family. QueF type 1 subfamily.

It is found in the cytoplasm. The enzyme catalyses 7-aminomethyl-7-carbaguanine + 2 NADP(+) = 7-cyano-7-deazaguanine + 2 NADPH + 3 H(+). It participates in tRNA modification; tRNA-queuosine biosynthesis. Its function is as follows. Catalyzes the NADPH-dependent reduction of 7-cyano-7-deazaguanine (preQ0) to 7-aminomethyl-7-deazaguanine (preQ1). The chain is NADPH-dependent 7-cyano-7-deazaguanine reductase from Alkaliphilus metalliredigens (strain QYMF).